The chain runs to 939 residues: Isoleucine--tRNA ligase (939 aa).

Positions 57 to 67 match the 'HIGH' region motif; that stretch reads PYANGEIHIGH. E563 provides a ligand contact to L-isoleucyl-5'-AMP. Residues 604–608 carry the 'KMSKS' region motif; the sequence is KMSKS. K607 lines the ATP pocket. The Zn(2+) site is built by C902, C905, C922, and C925.

The protein belongs to the class-I aminoacyl-tRNA synthetase family. IleS type 1 subfamily. In terms of assembly, monomer. Requires Zn(2+) as cofactor.

It is found in the cytoplasm. The catalysed reaction is tRNA(Ile) + L-isoleucine + ATP = L-isoleucyl-tRNA(Ile) + AMP + diphosphate. In terms of biological role, catalyzes the attachment of isoleucine to tRNA(Ile). As IleRS can inadvertently accommodate and process structurally similar amino acids such as valine, to avoid such errors it has two additional distinct tRNA(Ile)-dependent editing activities. One activity is designated as 'pretransfer' editing and involves the hydrolysis of activated Val-AMP. The other activity is designated 'posttransfer' editing and involves deacylation of mischarged Val-tRNA(Ile). The chain is Isoleucine--tRNA ligase from Methylococcus capsulatus (strain ATCC 33009 / NCIMB 11132 / Bath).